Consider the following 309-residue polypeptide: GalNAc(5)-diNAcBac-PP-undecaprenol beta-1,3-glucosyltransferase (309 aa).

A helical transmembrane segment spans residues 273–291; that stretch reads SLSIKINAPALILLILSII.

It belongs to the glycosyltransferase 2 family.

The protein resides in the membrane. The catalysed reaction is [alpha-D-GalNAc-(1-&gt;4)]4-alpha-D-GalNAc-(1-&gt;3)-alpha-D-diNAcBac-tri-trans,hepta-cis-undecaprenyl diphosphate + UDP-alpha-D-glucose = [alpha-D-GalNAc-(1-&gt;4)]2-[beta-D-Glc-(1-&gt;3)]-[alpha-D-GalNAc-(1-&gt;4)]2-alpha-D-GalNAc-(1-&gt;3)-alpha-D-diNAcBac-tri-trans,hepta-cis-undecaprenyl diphosphate + UDP + H(+). It participates in protein modification; protein glycosylation. In terms of biological role, glucosyltransferase that adds he final branching glucose to complete the final heptasaccharide structure in the N-linked protein glycosylation pathway. The protein is GalNAc(5)-diNAcBac-PP-undecaprenol beta-1,3-glucosyltransferase (pglI) of Campylobacter jejuni subsp. jejuni serotype O:2 (strain ATCC 700819 / NCTC 11168).